The following is a 461-amino-acid chain: RNA-binding protein ZCH321 (461 aa).

2 C3H1-type zinc fingers span residues 63–85 (LCQLFLNGRCRQGTQCHQVHAAL) and 181–208 (ACDFKICGLHTLDRCRYAEECIFLHICK). Residues 224–243 (TSQARDGGEPGPRGAKKGSV) form a disordered region. The MKT1-binding motif signature appears at 446-451 (WQHNPY).

Functionally, RNA-binding protein involved in regulation of mRNA stability. Promotes mRNA stabilization by recruiting MKT1 and PBP1. Stabilizes transcripts encoding mitochondrial proteins. This is RNA-binding protein ZCH321 from Trypanosoma brucei brucei (strain 927/4 GUTat10.1).